Reading from the N-terminus, the 170-residue chain is Calcineurin subunit B type 2 (170 aa).

Gly2 carries the N-myristoyl glycine lipid modification. EF-hand domains are found at residues 18 to 46 (DEIK…FMSL), 50 to 85 (RHNP…FSVK), 87 to 122 (DEEQ…MVGN), and 128 to 163 (QLQQ…LEIH). Ca(2+)-binding residues include Asp31, Asp33, Ser35, Ser37, Glu42, Asp63, Asp65, Asp67, Glu69, Glu74, Asp100, Asp102, Asp104, Tyr106, and Glu111. Positions 131 to 136 (QLVDKT) are calcineurin A binding. Ca(2+) contacts are provided by Asp141, Asp143, Asp145, Lys147, and Glu152.

It belongs to the calcineurin regulatory subunit family. In terms of assembly, forms a complex composed of a calmodulin-dependent catalytic subunit (also known as calcineurin A) and a regulatory Ca(2+)-binding subunit (also known as calcineurin B). There are three catalytic subunits, each encoded by a separate gene (PPP3CA, PPP3CB, and PPP3CC) and two regulatory subunits which are also encoded by separate genes (PPP3R1 and PPP3R2). Interacts with SPATA33 (via PQIIIT motif). Testis-specific.

The protein resides in the mitochondrion. Regulatory subunit of calcineurin, a calcium-dependent, calmodulin stimulated protein phosphatase. Confers calcium sensitivity. This Homo sapiens (Human) protein is Calcineurin subunit B type 2 (PPP3R2).